Consider the following 241-residue polypeptide: Ribonuclease PH (241 aa).

Phosphate contacts are provided by residues Arg89 and 127-129; that span reads GTR.

This sequence belongs to the RNase PH family. In terms of assembly, homohexameric ring arranged as a trimer of dimers.

It carries out the reaction tRNA(n+1) + phosphate = tRNA(n) + a ribonucleoside 5'-diphosphate. Its function is as follows. Phosphorolytic 3'-5' exoribonuclease that plays an important role in tRNA 3'-end maturation. Removes nucleotide residues following the 3'-CCA terminus of tRNAs; can also add nucleotides to the ends of RNA molecules by using nucleoside diphosphates as substrates, but this may not be physiologically important. Probably plays a role in initiation of 16S rRNA degradation (leading to ribosome degradation) during starvation. This chain is Ribonuclease PH, found in Xanthomonas campestris pv. campestris (strain 8004).